We begin with the raw amino-acid sequence, 471 residues long: Sulfate adenylyltransferase subunit 1 (471 aa).

In terms of domain architecture, tr-type G spans K22–L239. A G1 region spans residues G31–S38. Residue G31–S38 participates in GTP binding. The tract at residues G89–D93 is G2. The G3 stretch occupies residues D110–G113. GTP is bound by residues D110–H114 and N165–D168. A G4 region spans residues N165 to D168. The segment at S202–L204 is G5.

It belongs to the TRAFAC class translation factor GTPase superfamily. Classic translation factor GTPase family. CysN/NodQ subfamily. As to quaternary structure, heterodimer composed of CysD, the smaller subunit, and CysN.

The enzyme catalyses sulfate + ATP + H(+) = adenosine 5'-phosphosulfate + diphosphate. Its pathway is sulfur metabolism; hydrogen sulfide biosynthesis; sulfite from sulfate: step 1/3. Functionally, with CysD forms the ATP sulfurylase (ATPS) that catalyzes the adenylation of sulfate producing adenosine 5'-phosphosulfate (APS) and diphosphate, the first enzymatic step in sulfur assimilation pathway. APS synthesis involves the formation of a high-energy phosphoric-sulfuric acid anhydride bond driven by GTP hydrolysis by CysN coupled to ATP hydrolysis by CysD. This Alteromonas mediterranea (strain DSM 17117 / CIP 110805 / LMG 28347 / Deep ecotype) protein is Sulfate adenylyltransferase subunit 1.